The chain runs to 110 residues: Large ribosomal subunit protein eL30 (110 aa).

This sequence belongs to the eukaryotic ribosomal protein eL30 family.

This is Large ribosomal subunit protein eL30 (rpl30e) from Methanocaldococcus jannaschii (strain ATCC 43067 / DSM 2661 / JAL-1 / JCM 10045 / NBRC 100440) (Methanococcus jannaschii).